We begin with the raw amino-acid sequence, 231 residues long: Nucleoside diphosphate kinase II, chloroplastic (231 aa).

Residues 1–62 constitute a chloroplast transit peptide; it reads MVGATVVSKW…RNSASRRRLR (62 aa). Residues K91, F139, R167, T173, R184, and N194 each contribute to the ATP site. H197 functions as the Pros-phosphohistidine intermediate in the catalytic mechanism.

It belongs to the NDK family. In terms of assembly, interacts with PHYA, MPK3 and MPK6. Mg(2+) is required as a cofactor. Post-translationally, autophosphorylated.

The protein localises to the plastid. The protein resides in the chloroplast. The catalysed reaction is a 2'-deoxyribonucleoside 5'-diphosphate + ATP = a 2'-deoxyribonucleoside 5'-triphosphate + ADP. It catalyses the reaction a ribonucleoside 5'-diphosphate + ATP = a ribonucleoside 5'-triphosphate + ADP. Functionally, major role in the synthesis of nucleoside triphosphates other than ATP. The ATP gamma phosphate is transferred to the NDP beta phosphate via a ping-pong mechanism, using a phosphorylated active-site intermediate. May activate MPK3 and MPK6. May be involved in the regulation of cellular redox state and hydrogen peroxide-mediated MAP kinase signaling. The protein is Nucleoside diphosphate kinase II, chloroplastic (NDPK2) of Arabidopsis thaliana (Mouse-ear cress).